The sequence spans 224 residues: TBP-related factor (224 aa).

The segment at 14–34 (RDNVAATSNAAANPHAALQPQ) is disordered. Low complexity predominate over residues 17–34 (VAATSNAAANPHAALQPQ). Tandem repeats lie at residues 51-127 (LQNI…ARIL) and 141-218 (LQNI…SPIL).

Belongs to the TBP family. Primary spermatocytes in the adult testis and in a subset of cells in the dorsal medial region of the embryonic CNS.

The protein resides in the nucleus. In terms of biological role, acts as a transcription factor. Binds to the TATA box promoter element which lies close to the position of transcription initiation. Functionally, may be essential for embryonic development. The chain is TBP-related factor (Trf) from Drosophila melanogaster (Fruit fly).